Consider the following 218-residue polypeptide: uncharacterized protein (218 aa).

This is an uncharacterized protein from Acanthamoeba polyphaga (Amoeba).